A 138-amino-acid polypeptide reads, in one-letter code: Protein NrdI (138 aa).

It belongs to the NrdI family.

Probably involved in ribonucleotide reductase function. This chain is Protein NrdI, found in Beutenbergia cavernae (strain ATCC BAA-8 / DSM 12333 / CCUG 43141 / JCM 11478 / NBRC 16432 / NCIMB 13614 / HKI 0122).